Here is a 287-residue protein sequence, read N- to C-terminus: ATP synthase gamma chain (287 aa).

The protein belongs to the ATPase gamma chain family. As to quaternary structure, F-type ATPases have 2 components, CF(1) - the catalytic core - and CF(0) - the membrane proton channel. CF(1) has five subunits: alpha(3), beta(3), gamma(1), delta(1), epsilon(1). CF(0) has three main subunits: a, b and c.

It localises to the cell inner membrane. Produces ATP from ADP in the presence of a proton gradient across the membrane. The gamma chain is believed to be important in regulating ATPase activity and the flow of protons through the CF(0) complex. This chain is ATP synthase gamma chain, found in Sodalis glossinidius (strain morsitans).